The sequence spans 272 residues: Sulfur carrier protein FdhD (272 aa).

The active-site Cysteine persulfide intermediate is Cys114.

This sequence belongs to the FdhD family.

Its subcellular location is the cytoplasm. Required for formate dehydrogenase (FDH) activity. Acts as a sulfur carrier protein that transfers sulfur from IscS to the molybdenum cofactor prior to its insertion into FDH. The polypeptide is Sulfur carrier protein FdhD (Mycolicibacterium paratuberculosis (strain ATCC BAA-968 / K-10) (Mycobacterium paratuberculosis)).